The following is a 550-amino-acid chain: MLHYLATILWLAVAHASPGTPVIDWADRNYALVSVNSEATAYENLVERKAGVSVPVSWNVWNGGVGDMAYVLFNENQVWKGAAAAKRATIDVSKSGQFNMRVKLCDDDGFSVSEPVTVRVADTDGGHLSPLEYAWGENNKPGRPHNKTVAAYFVEWGVYGRGFPVDKVPLPNLSHLLYGFIPICGGDGLNDALKTIPGSFEALQRSCKGRADFKVAIHDPWAAIQKPQKGVSAWNEPYKGNFGQLMAAKLANPHLKILPSIGGWTLSDPFYFMHDADKRRVFVESVKEFLQVWKFFDGVDIDWEFPGGKGANPALGNGERDADTYLVLLKELRAMLDELQLQTNKTYELTSAISSGYDKIAVVKYDAAQRFLDKIFLMSYDFKGAWSNTDLGYQTTLYAPSWNANELYTTDHAVKLLTGQGVAAHKLIVGVAMYGRGWTGVSGYAGDKYFSGTADGPVPGTWENGVVDYRQINNELSKYIYRFDAAAKAAYVFNKERGDLISFDSVDSVLAKNVYVQQNGLGGLFAWEIDADNGDLLNAMNERVRVKDEL.

The N-terminal stretch at 1–16 is a signal peptide; sequence MLHYLATILWLAVAHA. Asparagine 146 and asparagine 172 each carry an N-linked (GlcNAc...) asparagine; by host glycan. One can recognise a GH18 domain in the interval 147–547; that stretch reads KTVAAYFVEW…NAMNERVRVK (401 aa). The active-site Proton donor is glutamate 304. Residue asparagine 344 is glycosylated (N-linked (GlcNAc...) asparagine; by host). A Prevents secretion from ER motif is present at residues 547–550; it reads KDEL.

It belongs to the glycosyl hydrolase 18 family. Chitinase class II subfamily.

It is found in the host endoplasmic reticulum lumen. The catalysed reaction is Random endo-hydrolysis of N-acetyl-beta-D-glucosaminide (1-&gt;4)-beta-linkages in chitin and chitodextrins.. The protein is Probable endochitinase of Orgyia pseudotsugata (Douglas-fir tussock moth).